Reading from the N-terminus, the 412-residue chain is Serine hydroxymethyltransferase (412 aa).

(6S)-5,6,7,8-tetrahydrofolate is bound by residues Leu-117 and 121–123 (GHL). Lys-226 bears the N6-(pyridoxal phosphate)lysine mark.

The protein belongs to the SHMT family. Homodimer. Pyridoxal 5'-phosphate serves as cofactor.

The protein resides in the cytoplasm. It carries out the reaction (6R)-5,10-methylene-5,6,7,8-tetrahydrofolate + glycine + H2O = (6S)-5,6,7,8-tetrahydrofolate + L-serine. It participates in one-carbon metabolism; tetrahydrofolate interconversion. It functions in the pathway amino-acid biosynthesis; glycine biosynthesis; glycine from L-serine: step 1/1. Functionally, catalyzes the reversible interconversion of serine and glycine with tetrahydrofolate (THF) serving as the one-carbon carrier. This reaction serves as the major source of one-carbon groups required for the biosynthesis of purines, thymidylate, methionine, and other important biomolecules. Also exhibits THF-independent aldolase activity toward beta-hydroxyamino acids, producing glycine and aldehydes, via a retro-aldol mechanism. The sequence is that of Serine hydroxymethyltransferase from Staphylococcus haemolyticus (strain JCSC1435).